The primary structure comprises 272 residues: Shikimate dehydrogenase (NADP(+)) (272 aa).

Shikimate-binding positions include 14 to 16 and T61; that span reads SKS. K65 serves as the catalytic Proton acceptor. E77 is a binding site for NADP(+). N86 and D102 together coordinate shikimate. NADP(+) is bound by residues 126–130, 149–154, and M213; these read GAGGA and NRTASR. Residue Y215 participates in shikimate binding. An NADP(+)-binding site is contributed by G237.

It belongs to the shikimate dehydrogenase family. In terms of assembly, homodimer.

The enzyme catalyses shikimate + NADP(+) = 3-dehydroshikimate + NADPH + H(+). It participates in metabolic intermediate biosynthesis; chorismate biosynthesis; chorismate from D-erythrose 4-phosphate and phosphoenolpyruvate: step 4/7. Functionally, involved in the biosynthesis of the chorismate, which leads to the biosynthesis of aromatic amino acids. Catalyzes the reversible NADPH linked reduction of 3-dehydroshikimate (DHSA) to yield shikimate (SA). This Salmonella choleraesuis (strain SC-B67) protein is Shikimate dehydrogenase (NADP(+)).